Here is a 177-residue protein sequence, read N- to C-terminus: Large ribosomal subunit protein uL6 (177 aa).

Belongs to the universal ribosomal protein uL6 family. In terms of assembly, part of the 50S ribosomal subunit.

Functionally, this protein binds to the 23S rRNA, and is important in its secondary structure. It is located near the subunit interface in the base of the L7/L12 stalk, and near the tRNA binding site of the peptidyltransferase center. The sequence is that of Large ribosomal subunit protein uL6 from Albidiferax ferrireducens (strain ATCC BAA-621 / DSM 15236 / T118) (Rhodoferax ferrireducens).